A 396-amino-acid polypeptide reads, in one-letter code: 1-deoxy-D-xylulose 5-phosphate reductoisomerase (396 aa).

Residues Thr15, Gly16, Ser17, Ile18, Gly41, and Asn129 each coordinate NADPH. A 1-deoxy-D-xylulose 5-phosphate-binding site is contributed by Lys130. An NADPH-binding site is contributed by Glu131. Asp155 is a binding site for Mn(2+). 1-deoxy-D-xylulose 5-phosphate contacts are provided by Ser156, Glu157, Ser182, and His205. Glu157 serves as a coordination point for Mn(2+). Gly211 contacts NADPH. 1-deoxy-D-xylulose 5-phosphate is bound by residues Ser218, Asn223, Lys224, and Glu227. Position 227 (Glu227) interacts with Mn(2+).

Belongs to the DXR family. It depends on Mg(2+) as a cofactor. The cofactor is Mn(2+).

The catalysed reaction is 2-C-methyl-D-erythritol 4-phosphate + NADP(+) = 1-deoxy-D-xylulose 5-phosphate + NADPH + H(+). It functions in the pathway isoprenoid biosynthesis; isopentenyl diphosphate biosynthesis via DXP pathway; isopentenyl diphosphate from 1-deoxy-D-xylulose 5-phosphate: step 1/6. In terms of biological role, catalyzes the NADPH-dependent rearrangement and reduction of 1-deoxy-D-xylulose-5-phosphate (DXP) to 2-C-methyl-D-erythritol 4-phosphate (MEP). The chain is 1-deoxy-D-xylulose 5-phosphate reductoisomerase from Xanthomonas axonopodis pv. citri (strain 306).